The following is a 439-amino-acid chain: Xaa-Pro dipeptidase (439 aa).

Positions 244, 255, 335, 380, and 419 each coordinate Mn(2+).

It belongs to the peptidase M24B family. Bacterial-type prolidase subfamily. Mn(2+) serves as cofactor.

The catalysed reaction is Xaa-L-Pro dipeptide + H2O = an L-alpha-amino acid + L-proline. Splits dipeptides with a prolyl residue in the C-terminal position. The chain is Xaa-Pro dipeptidase from Shewanella sp. (strain MR-7).